A 106-amino-acid chain; its full sequence is BLOC-1-related complex subunit 7 (106 aa).

Belongs to the BORCS7 family. As to quaternary structure, component of the BLOC-one-related complex (BORC) which is composed of BLOC1S1, BLOC1S2, BORCS5, BORCS6, BORCS7, BORCS8, KXD1 and SNAPIN.

The protein resides in the lysosome membrane. Its function is as follows. As part of the BORC complex may play a role in lysosomes movement and localization at the cell periphery. Associated with the cytosolic face of lysosomes, the BORC complex may recruit ARL8B and couple lysosomes to microtubule plus-end-directed kinesin motor. The protein is BLOC-1-related complex subunit 7 of Pongo abelii (Sumatran orangutan).